The chain runs to 205 residues: Regulatory protein RecX (205 aa).

It belongs to the RecX family.

Its subcellular location is the cytoplasm. In terms of biological role, modulates RecA activity. The protein is Regulatory protein RecX of Finegoldia magna (strain ATCC 29328 / DSM 20472 / WAL 2508) (Peptostreptococcus magnus).